The following is a 65-amino-acid chain: Large ribosomal subunit protein bL35 (65 aa).

A compositionally biased stretch (basic residues) spans 1 to 16 (MPKMKTKSSAKKRFKV). Positions 1 to 26 (MPKMKTKSSAKKRFKVRSSGGIKRSQ) are disordered.

The protein belongs to the bacterial ribosomal protein bL35 family.

The protein is Large ribosomal subunit protein bL35 of Azoarcus sp. (strain BH72).